The chain runs to 298 residues: KH domain-containing protein At1g09660/At1g09670 (298 aa).

One can recognise a KH domain in the interval 152–219; that stretch reads DVPVDKYPSY…EHLCEPLHVL (68 aa). A disordered region spans residues 266 to 298; the sequence is NGTLREESPSPSLSPCLSPSMSPFNSKRAKTEI. 2 positions are modified to phosphoserine: S273 and S287. Residues 274–288 show a composition bias toward low complexity; the sequence is PSPSLSPCLSPSMSP.

The protein resides in the nucleus. The sequence is that of KH domain-containing protein At1g09660/At1g09670 from Arabidopsis thaliana (Mouse-ear cress).